Here is a 123-residue protein sequence, read N- to C-terminus: Small ribosomal subunit protein uS12 (123 aa).

The residue at position 89 (D89) is a 3-methylthioaspartic acid.

It belongs to the universal ribosomal protein uS12 family. In terms of assembly, part of the 30S ribosomal subunit. Contacts proteins S8 and S17. May interact with IF1 in the 30S initiation complex.

Functionally, with S4 and S5 plays an important role in translational accuracy. Interacts with and stabilizes bases of the 16S rRNA that are involved in tRNA selection in the A site and with the mRNA backbone. Located at the interface of the 30S and 50S subunits, it traverses the body of the 30S subunit contacting proteins on the other side and probably holding the rRNA structure together. The combined cluster of proteins S8, S12 and S17 appears to hold together the shoulder and platform of the 30S subunit. This Bartonella bacilliformis (strain ATCC 35685 / KC583 / Herrer 020/F12,63) protein is Small ribosomal subunit protein uS12.